The primary structure comprises 309 residues: 11-beta-hydroxysteroid dehydrogenase-like 3 (309 aa).

The chain crosses the membrane as a helical; Signal-anchor for type II membrane protein span at residues 10–30 (LLLPPLTIIFLFLFYPFYLLI). Residues 54-80 (GASSGIGEHVAYEYAKKGAYLALVARR) and Asp105 contribute to the NADP(+) site. Ser184 lines the substrate pocket. Catalysis depends on Tyr197, which acts as the Proton acceptor. Residues 197–201 (YAASK) and Lys201 contribute to the NADP(+) site.

It belongs to the short-chain dehydrogenases/reductases (SDR) family.

The protein localises to the membrane. The sequence is that of 11-beta-hydroxysteroid dehydrogenase-like 3 (HSD3) from Arabidopsis thaliana (Mouse-ear cress).